Here is a 441-residue protein sequence, read N- to C-terminus: tRNA-2-methylthio-N(6)-dimethylallyladenosine synthase (441 aa).

Positions 5-121 (KKLYLETFGC…LQGMVAAAEE (117 aa)) constitute an MTTase N-terminal domain. 6 residues coordinate [4Fe-4S] cluster: Cys-14, Cys-50, Cys-84, Cys-159, Cys-163, and Cys-166. Positions 145-375 (AEGGVTRFVT…QAAQKKTTLA (231 aa)) constitute a Radical SAM core domain. A TRAM domain is found at 378–440 (RSLEGTVQKV…QTLLKGEIVH (63 aa)).

This sequence belongs to the methylthiotransferase family. MiaB subfamily. Monomer. It depends on [4Fe-4S] cluster as a cofactor.

The protein resides in the cytoplasm. It carries out the reaction N(6)-dimethylallyladenosine(37) in tRNA + (sulfur carrier)-SH + AH2 + 2 S-adenosyl-L-methionine = 2-methylsulfanyl-N(6)-dimethylallyladenosine(37) in tRNA + (sulfur carrier)-H + 5'-deoxyadenosine + L-methionine + A + S-adenosyl-L-homocysteine + 2 H(+). Its function is as follows. Catalyzes the methylthiolation of N6-(dimethylallyl)adenosine (i(6)A), leading to the formation of 2-methylthio-N6-(dimethylallyl)adenosine (ms(2)i(6)A) at position 37 in tRNAs that read codons beginning with uridine. This is tRNA-2-methylthio-N(6)-dimethylallyladenosine synthase from Citrifermentans bemidjiense (strain ATCC BAA-1014 / DSM 16622 / JCM 12645 / Bem) (Geobacter bemidjiensis).